Here is a 121-residue protein sequence, read N- to C-terminus: Large ribosomal subunit protein uL24 (121 aa).

It belongs to the universal ribosomal protein uL24 family. In terms of assembly, part of the 50S ribosomal subunit.

One of two assembly initiator proteins, it binds directly to the 5'-end of the 23S rRNA, where it nucleates assembly of the 50S subunit. Its function is as follows. Located at the polypeptide exit tunnel on the outside of the subunit. In Pyrococcus abyssi (strain GE5 / Orsay), this protein is Large ribosomal subunit protein uL24.